Here is a 158-residue protein sequence, read N- to C-terminus: Small ribosomal subunit protein uS7 (158 aa).

Belongs to the universal ribosomal protein uS7 family. As to quaternary structure, part of the 30S ribosomal subunit. Contacts proteins S9 and S11.

One of the primary rRNA binding proteins, it binds directly to 16S rRNA where it nucleates assembly of the head domain of the 30S subunit. Is located at the subunit interface close to the decoding center, probably blocks exit of the E-site tRNA. The chain is Small ribosomal subunit protein uS7 from Azobacteroides pseudotrichonymphae genomovar. CFP2.